A 158-amino-acid chain; its full sequence is Eukaryotic translation initiation factor 5A (158 aa).

Lysine 51 is subject to Hypusine.

This sequence belongs to the eIF-5A family. Lys-51 undergoes hypusination, a unique post-translational modification that consists in the addition of a butylamino group from spermidine to lysine side chain, leading to the formation of the unusual amino acid hypusine. eIF-5As are the only known proteins to undergo this modification, which is essential for their function.

The protein resides in the cytoplasm. Functionally, translation factor that promotes translation elongation and termination, particularly upon ribosome stalling at specific amino acid sequence contexts. Binds between the exit (E) and peptidyl (P) site of the ribosome and promotes rescue of stalled ribosome: specifically required for efficient translation of polyproline-containing peptides as well as other motifs that stall the ribosome. Acts as a ribosome quality control (RQC) cofactor by joining the RQC complex to facilitate peptidyl transfer during CAT tailing step. This Candida albicans (strain SC5314 / ATCC MYA-2876) (Yeast) protein is Eukaryotic translation initiation factor 5A (ANB1).